Here is a 219-residue protein sequence, read N- to C-terminus: Transcriptional regulator AcuR (219 aa).

The disordered stretch occupies residues 1 to 25 (MPLTDTPPSVPQKPRRGRPRGAPDA). The HTH tetR-type domain maps to 26-86 (SLAHQSLIRA…ALIEAYDTYF (61 aa)). The segment at residues 49–68 (GVDEILKAARVPKGSFYHYF) is a DNA-binding region (H-T-H motif).

Its function is as follows. A transcriptional repressor for its operon. Probably binds to 2 operator sequences in the promoter. The polypeptide is Transcriptional regulator AcuR (acuR) (Cereibacter sphaeroides (strain ATCC 17023 / DSM 158 / JCM 6121 / CCUG 31486 / LMG 2827 / NBRC 12203 / NCIMB 8253 / ATH 2.4.1.) (Rhodobacter sphaeroides)).